A 385-amino-acid chain; its full sequence is 8-amino-7-oxononanoate synthase (385 aa).

Arg-23 serves as a coordination point for substrate. 110-111 (GF) contributes to the pyridoxal 5'-phosphate binding site. His-135 serves as a coordination point for substrate. Pyridoxal 5'-phosphate-binding residues include Ser-180, His-208, and Thr-234. Residue Lys-237 is modified to N6-(pyridoxal phosphate)lysine. A substrate-binding site is contributed by Thr-350.

The protein belongs to the class-II pyridoxal-phosphate-dependent aminotransferase family. BioF subfamily. As to quaternary structure, homodimer. Requires pyridoxal 5'-phosphate as cofactor.

The enzyme catalyses 6-carboxyhexanoyl-[ACP] + L-alanine + H(+) = (8S)-8-amino-7-oxononanoate + holo-[ACP] + CO2. It participates in cofactor biosynthesis; biotin biosynthesis. Catalyzes the decarboxylative condensation of pimeloyl-[acyl-carrier protein] and L-alanine to produce 8-amino-7-oxononanoate (AON), [acyl-carrier protein], and carbon dioxide. This chain is 8-amino-7-oxononanoate synthase, found in Vibrio vulnificus (strain YJ016).